A 349-amino-acid chain; its full sequence is Transcription repressor OFP5 (349 aa).

3 disordered regions span residues Met-1 to Arg-20, Lys-29 to Asn-94, and Lys-143 to Arg-183. Residues Val-10–Arg-20 are compositionally biased toward low complexity. The span at Lys-37 to Ala-48 shows a compositional bias: basic and acidic residues. Residues Ser-49 to Thr-62 are compositionally biased toward polar residues. Basic and acidic residues-rich tracts occupy residues Arg-63–Asn-94 and Lys-143–Val-167. Residues Val-286 to Asp-345 form the OVATE domain.

In terms of assembly, interacts with BLH1, BLH2, BLH3, BLH4, BLH6 and BLH10. In terms of tissue distribution, expressed in roots, rosette and cauline leaves, and flower buds.

The protein resides in the nucleus. Its function is as follows. Transcriptional repressor that regulates multiple aspects of plant growth and development through the regulation of BEL1-LIKE (BLH) and KNOX TALE (KNAT) homeodomain transcription factors. Required for embryo development. This is Transcription repressor OFP5 (OFP5) from Arabidopsis thaliana (Mouse-ear cress).